The following is a 146-amino-acid chain: UPF0178 protein BAMEG_1545 (146 aa).

This sequence belongs to the UPF0178 family.

This chain is UPF0178 protein BAMEG_1545, found in Bacillus anthracis (strain CDC 684 / NRRL 3495).